Consider the following 390-residue polypeptide: GTPase Obg (390 aa).

The region spanning 1–159 (MKFIDESLIR…RDLLLELMLL (159 aa)) is the Obg domain. An OBG-type G domain is found at 160-333 (ADVGMLGLPN…LCRDIMDFII (174 aa)). Residues 166–173 (GLPNAGKS), 191–195 (FTTLV), 213–216 (DIPG), 283–286 (NKID), and 314–316 (SAA) each bind GTP. The Mg(2+) site is built by S173 and T193. The disordered stretch occupies residues 363–382 (EHQFDDDEDWDDDWSEEDDE). A compositionally biased stretch (acidic residues) spans 366–382 (FDDDEDWDDDWSEEDDE).

Belongs to the TRAFAC class OBG-HflX-like GTPase superfamily. OBG GTPase family. In terms of assembly, monomer. Mg(2+) is required as a cofactor.

It localises to the cytoplasm. Its function is as follows. An essential GTPase which binds GTP, GDP and possibly (p)ppGpp with moderate affinity, with high nucleotide exchange rates and a fairly low GTP hydrolysis rate. Plays a role in control of the cell cycle, stress response, ribosome biogenesis and in those bacteria that undergo differentiation, in morphogenesis control. This chain is GTPase Obg, found in Haemophilus influenzae (strain ATCC 51907 / DSM 11121 / KW20 / Rd).